The sequence spans 340 residues: Tetraacyldisaccharide 4'-kinase (340 aa).

50–57 (HGGGAGKT) is a binding site for ATP.

The protein belongs to the LpxK family.

The catalysed reaction is a lipid A disaccharide + ATP = a lipid IVA + ADP + H(+). It participates in glycolipid biosynthesis; lipid IV(A) biosynthesis; lipid IV(A) from (3R)-3-hydroxytetradecanoyl-[acyl-carrier-protein] and UDP-N-acetyl-alpha-D-glucosamine: step 6/6. Its function is as follows. Transfers the gamma-phosphate of ATP to the 4'-position of a tetraacyldisaccharide 1-phosphate intermediate (termed DS-1-P) to form tetraacyldisaccharide 1,4'-bis-phosphate (lipid IVA). This Rhodopseudomonas palustris (strain BisA53) protein is Tetraacyldisaccharide 4'-kinase.